A 107-amino-acid chain; its full sequence is Nucleoid-associated protein Hhal_0231 (107 aa).

Disordered stretches follow at residues 1–24 and 82–107; these read MKGG…KAQE and VQRE…KLPF. Positions 15–24 are enriched in basic and acidic residues; that stretch reads MQEDMQKAQE.

The protein belongs to the YbaB/EbfC family. As to quaternary structure, homodimer.

It is found in the cytoplasm. The protein resides in the nucleoid. In terms of biological role, binds to DNA and alters its conformation. May be involved in regulation of gene expression, nucleoid organization and DNA protection. This chain is Nucleoid-associated protein Hhal_0231, found in Halorhodospira halophila (strain DSM 244 / SL1) (Ectothiorhodospira halophila (strain DSM 244 / SL1)).